Consider the following 202-residue polypeptide: Recoverin (202 aa).

Glycine 2 carries the N-myristoyl glycine lipid modification. Cysteine 39 carries the post-translational modification Cysteine sulfenic acid (-SOH). EF-hand domains lie at 41-59 (SGRITRQEFESIYSKFFPD), 61-96 (DPKAYAQHVFRSFDANSDGTLDFKEYVIALHMTTAG), 97-132 (KPTQKLEWAFSLYDVDGNGTISKNEVLEIVMAIFKM), and 147-182 (TPEKRAEKIWAFFGKKEDDKLTEEEFIEGTLANKEI). The Ca(2+) site is built by aspartate 74, asparagine 76, aspartate 78, threonine 80, glutamate 85, aspartate 110, aspartate 112, asparagine 114, threonine 116, and glutamate 121. Positions 189–192 (EPQK) are interaction with GRK1.

The protein belongs to the recoverin family. In terms of assembly, homodimer; disulfide-linked. Homodimerization is caused by prolonged intense illumination. May form a complex composed of RHO, GRK1 and RCVRN in a Ca(2+)-dependent manner; RCVRN prevents the interaction between GRK1 and RHO. Interacts (via C-terminus) with GRK1 (via N-terminus); the interaction is Ca(2+)-dependent. Post-translationally, the N-terminal glycine is linked to one of four different types of acyl groups. The most abundant is myristoleate (14:1), but 14:0, 14:2, and 12:0 acyl residues are also present. The Ca(2+) induced exposure of the myristoyl group, known as the calcium-myristoyl switch, promotes RCVRN binding to the photoreceptor cell membranes only when intracellular Ca(2+) concentration is high. Oxidation on Cys-39 occurs in response to prolonged intense illumination and results in the formation of disulfide homodimers, and to a lesser extent disulfide-linked heterodimers. Expressed in rod photoreceptors in the retina (at protein level).

The protein localises to the photoreceptor inner segment. It localises to the cell projection. It is found in the cilium. The protein resides in the photoreceptor outer segment. Its subcellular location is the photoreceptor outer segment membrane. The protein localises to the perikaryon. Functionally, acts as a calcium sensor and regulates phototransduction of cone and rod photoreceptor cells. Modulates light sensitivity of cone photoreceptor in dark and dim conditions. In response to high Ca(2+) levels induced by low light levels, prolongs RHO/rhodopsin activation in rod photoreceptor cells by binding to and inhibiting GRK1-mediated phosphorylation of RHO/rhodopsin. Plays a role in scotopic vision/enhances vision in dim light by enhancing signal transfer between rod photoreceptors and rod bipolar cells. Improves rod photoreceptor sensitivity in dim light and mediates response of rod photoreceptors to facilitate detection of change and motion in bright light. This chain is Recoverin (Rcvrn), found in Mus musculus (Mouse).